Consider the following 455-residue polypeptide: MGLSVVILAAGKGSRMNSNKPKVLQTLAAKTLIEHVVSSVEKLNPDNIVVVTGHLKEQVEDALQGRNITFVYQQQQLGTGHAVLQALPYLKEQKVLILYGDVPLISTEVLENLVDTTNYDDLGVLTAFVENPQGLGRIVRDKFGAVTEIVEEKDANDIQRQIKEINTGIYCVHKNLLQKWLPEIKANNVQKEYYLTDIITFAKADHVSINVTHPINEFEILGVNDRTQLASLERVWQRNVAEKIMAKGVSIADPNRFDVRGNLDVGKDCWIDINVIIKGNVKLGNNVVIGANCILKNCIIEDNVRIKSNSMVDGSIIREGAIVGPFARVRPECDVKEGAVIGNFVEAKKTILGKGSKASHLTYLGDSEIGANCNIGAGVITCNYDGVNKHKTVIGDYAFIGSDSQLIAPVNIGQGATVGAGSTIVKDVPADNLAISRARQRHIDTWQRSVKKTDK.

Residues M1 to R226 are pyrophosphorylase. Residues L8–G11, K22, Q73, G78–T79, Y99–D101, G136, E151, N166, and N224 contribute to the UDP-N-acetyl-alpha-D-glucosamine site. D101 lines the Mg(2+) pocket. N224 provides a ligand contact to Mg(2+). Residues T227–K247 form a linker region. The N-acetyltransferase stretch occupies residues G248–K455. The UDP-N-acetyl-alpha-D-glucosamine site is built by R330 and K348. The active-site Proton acceptor is H360. 2 residues coordinate UDP-N-acetyl-alpha-D-glucosamine: Y363 and N374. Residues A377, N383 to Y384, S402, A420, and R437 contribute to the acetyl-CoA site.

It in the N-terminal section; belongs to the N-acetylglucosamine-1-phosphate uridyltransferase family. In the C-terminal section; belongs to the transferase hexapeptide repeat family. As to quaternary structure, homotrimer. Requires Mg(2+) as cofactor.

It localises to the cytoplasm. The enzyme catalyses alpha-D-glucosamine 1-phosphate + acetyl-CoA = N-acetyl-alpha-D-glucosamine 1-phosphate + CoA + H(+). It catalyses the reaction N-acetyl-alpha-D-glucosamine 1-phosphate + UTP + H(+) = UDP-N-acetyl-alpha-D-glucosamine + diphosphate. The protein operates within nucleotide-sugar biosynthesis; UDP-N-acetyl-alpha-D-glucosamine biosynthesis; N-acetyl-alpha-D-glucosamine 1-phosphate from alpha-D-glucosamine 6-phosphate (route II): step 2/2. Its pathway is nucleotide-sugar biosynthesis; UDP-N-acetyl-alpha-D-glucosamine biosynthesis; UDP-N-acetyl-alpha-D-glucosamine from N-acetyl-alpha-D-glucosamine 1-phosphate: step 1/1. It participates in bacterial outer membrane biogenesis; LPS lipid A biosynthesis. Its function is as follows. Catalyzes the last two sequential reactions in the de novo biosynthetic pathway for UDP-N-acetylglucosamine (UDP-GlcNAc). The C-terminal domain catalyzes the transfer of acetyl group from acetyl coenzyme A to glucosamine-1-phosphate (GlcN-1-P) to produce N-acetylglucosamine-1-phosphate (GlcNAc-1-P), which is converted into UDP-GlcNAc by the transfer of uridine 5-monophosphate (from uridine 5-triphosphate), a reaction catalyzed by the N-terminal domain. The chain is Bifunctional protein GlmU from Francisella tularensis subsp. holarctica (strain OSU18).